The chain runs to 377 residues: MAEKRHGAWFGFGFCGFGQALGSGNSHHSVYSPEPLHASDDICQVSAGWSYTALVTRGGRVELSGSVSGAADGCRDVWASEELLVLLRNKGGSSTEVQAWVPGSALQGEPLWVQNLVSGAKGQGEDEPSRESRMGTLPLLPCARAYVTPEPPFCQPLAPELRVRQLELGAEHVLLLCAAGQVFSWGAGRHGQLGHGTLEAELEPRLLEALQGLRMAKVAAGGWHSVCLSETGDIYIWGWNESGQLALPTRSGTENKAEREEATELNEDGLKEELAVADAGAPAHFIAIQPFPALLDLPLGSDAVMASCGSRHTAVVTRTGELYTWGWGKYGQLGHKDSTSLDRPCCVEYFVERQLEVRAVTCGPWNTYVYAMERDKS.

The interval 1–172 (MAEKRHGAWF…VRQLELGAEH (172 aa)) is interaction with KDM8. One copy of the RCC1 1 repeat lies at 6-57 (HGAWFGFGFCGFGQALGSGNSHHSVYSPEPLHASDDICQVSAGWSYTALVTR). R144 is subject to (3R)-3-hydroxyarginine. 3 RCC1 repeats span residues 179–230 (AGQV…CLSE), 232–289 (GDIY…IAIQ), and 319–372 (TGEL…VYAM).

Found in a complex with KDM8. Interacts (via N-terminus) with KDM8 (via N-terminus). Specifically hydroxylated (with R stereochemistry) at C-3 of ARG-141 by KDM8.

It localises to the chromosome. Its function is as follows. Plays a role in transcriptional repression of satellite repeats, possibly by regulating H3K36 methylation levels in centromeric regions together with KDM8. Possibly together with KDM8, is involved in proper mitotic spindle organization and chromosome segregation. Plays a role in regulating alpha-tubulin deacetylation and cytoskeletal microtubule stability, thereby promoting cell migration and TGF-beta-induced epithelial to mesenchymal transition (EMT), potentially through the inhibition of KDM8. This chain is RCC1 domain-containing protein 1 (Rccd1), found in Mus musculus (Mouse).